A 417-amino-acid chain; its full sequence is Serine--tRNA ligase (417 aa).

Position 232–234 (232–234 (TAE)) interacts with L-serine. ATP contacts are provided by residues 263 to 265 (RRE) and Val-279. L-serine is bound at residue Glu-286. 350 to 353 (EISS) lines the ATP pocket. Ser-385 is a binding site for L-serine.

The protein belongs to the class-II aminoacyl-tRNA synthetase family. Type-1 seryl-tRNA synthetase subfamily. In terms of assembly, homodimer. The tRNA molecule binds across the dimer.

The protein localises to the cytoplasm. The enzyme catalyses tRNA(Ser) + L-serine + ATP = L-seryl-tRNA(Ser) + AMP + diphosphate + H(+). It carries out the reaction tRNA(Sec) + L-serine + ATP = L-seryl-tRNA(Sec) + AMP + diphosphate + H(+). It functions in the pathway aminoacyl-tRNA biosynthesis; selenocysteinyl-tRNA(Sec) biosynthesis; L-seryl-tRNA(Sec) from L-serine and tRNA(Sec): step 1/1. Catalyzes the attachment of serine to tRNA(Ser). Is also able to aminoacylate tRNA(Sec) with serine, to form the misacylated tRNA L-seryl-tRNA(Sec), which will be further converted into selenocysteinyl-tRNA(Sec). This is Serine--tRNA ligase from Leptospira borgpetersenii serovar Hardjo-bovis (strain JB197).